The primary structure comprises 394 residues: MSKEKFERLKPHVNVGTIGHVDHGKTTLTAAICTVLAKVYGGDAKDFASIDNAPEERERGITISTSHVEYDTPARHYAHVDCPGHADYVKNMITGAAQMDGGILVVAATDGPMPQTREHILLGRQVGIPYIIVFMNKCDMVDDEELLELVEMEVRELLSEYDFPGDDCPVIMGSALGALNGEAQWEEKIIELAEALDNYIPEPERAIDLPFILPIEDVFSIQGRGTVVTGRVEQGIVRIGEEVAIIGIKETTTTTCTGVEMFRKLLDEGRAGENVGVLLRGTKRDDVERGQVLAKPGSITPHTTFESEIYVLSKDEGGRHTPFFKGYRPQFYFRTTDVTGTIELPEGVEMVMPGDNIQMKVTLIAPIAMDEGLRFAIREGGRTVGAGVVAKIFE.

A tr-type G domain is found at 10–204 (KPHVNVGTIG…ALDNYIPEPE (195 aa)). The segment at 19–26 (GHVDHGKT) is G1. A GTP-binding site is contributed by 19–26 (GHVDHGKT). T26 is a Mg(2+) binding site. The G2 stretch occupies residues 60–64 (GITIS). The G3 stretch occupies residues 81–84 (DCPG). Residues 81 to 85 (DCPGH) and 136 to 139 (NKCD) each bind GTP. Residues 136 to 139 (NKCD) are G4. A G5 region spans residues 174–176 (SAL).

It belongs to the TRAFAC class translation factor GTPase superfamily. Classic translation factor GTPase family. EF-Tu/EF-1A subfamily. In terms of assembly, monomer.

The protein localises to the cytoplasm. It carries out the reaction GTP + H2O = GDP + phosphate + H(+). In terms of biological role, GTP hydrolase that promotes the GTP-dependent binding of aminoacyl-tRNA to the A-site of ribosomes during protein biosynthesis. This Photobacterium profundum (strain SS9) protein is Elongation factor Tu 2.